Here is a 199-residue protein sequence, read N- to C-terminus: Recombination protein RecR (199 aa).

Residues 57–72 (CSICGNITEDDPCVIC) form a C4-type zinc finger. The region spanning 80 to 176 (STVLVVEEAK…KVTRLAHGLS (97 aa)) is the Toprim domain.

This sequence belongs to the RecR family.

In terms of biological role, may play a role in DNA repair. It seems to be involved in an RecBC-independent recombinational process of DNA repair. It may act with RecF and RecO. This Lactiplantibacillus plantarum (strain ATCC BAA-793 / NCIMB 8826 / WCFS1) (Lactobacillus plantarum) protein is Recombination protein RecR.